The following is a 601-amino-acid chain: Elongation factor 4 (601 aa).

One can recognise a tr-type G domain in the interval 7 to 189 (KHTRNFSIVA…AIVEKVPVPD (183 aa)). Residues 19–24 (DHGKST) and 136–139 (NKID) contribute to the GTP site.

This sequence belongs to the TRAFAC class translation factor GTPase superfamily. Classic translation factor GTPase family. LepA subfamily.

Its subcellular location is the cell membrane. The catalysed reaction is GTP + H2O = GDP + phosphate + H(+). Required for accurate and efficient protein synthesis under certain stress conditions. May act as a fidelity factor of the translation reaction, by catalyzing a one-codon backward translocation of tRNAs on improperly translocated ribosomes. Back-translocation proceeds from a post-translocation (POST) complex to a pre-translocation (PRE) complex, thus giving elongation factor G a second chance to translocate the tRNAs correctly. Binds to ribosomes in a GTP-dependent manner. In Clostridium novyi (strain NT), this protein is Elongation factor 4.